The primary structure comprises 354 residues: Probable glucan endo-1,3-beta-glucosidase BG5 (354 aa).

A signal peptide spans 1 to 30 (MLYLPKKLFLFFFSCIVVIVNYNNSDFVNA). The Proton donor role is filled by Glu-137. The active-site Nucleophile is the Glu-276. Asn-286 is a glycosylation site (N-linked (GlcNAc...) asparagine).

Belongs to the glycosyl hydrolase 17 family.

It is found in the secreted. The enzyme catalyses Hydrolysis of (1-&gt;3)-beta-D-glucosidic linkages in (1-&gt;3)-beta-D-glucans.. Functionally, may play a role in plant defense against pathogens. The protein is Probable glucan endo-1,3-beta-glucosidase BG5 of Arabidopsis thaliana (Mouse-ear cress).